The sequence spans 351 residues: Dysbindin (351 aa).

Residue S11 is modified to Phosphoserine. Residues 88-181 are a coiled coil; sequence EKKKTSLVEL…ELDAEHAQKV (94 aa). The dysbindin stretch occupies residues 173-331; sequence LDAEHAQKVL…DEEEVQVDTA (159 aa). Residues 243–256 carry the Nuclear export signal motif; that stretch reads LMDISDQEALDVFL. The segment at 286–351 is disordered; that stretch reads PNPSELRAKP…TPDGGEDSDS (66 aa). The span at 296–305 shows a compositional bias: polar residues; it reads PSSSSTCTDS. Phosphoserine is present on residues S316, S321, and S349.

Belongs to the dysbindin family. In terms of assembly, interacts (via its coiled coil domain) with KXD1. Interacts with CMYA5, PI4K2 and RNF151. Component of the biogenesis of lysosome-related organelles complex 1 (BLOC-1) composed of at least BLOC1S1, BLOC1S2, BLOC1S3, BLOC1S4, BLOC1S5, BLOC1S6, DTNBP1/BLOC1S7 and SNAPIN/BLOC1S8. Interacts directly in the complex with BLOC1S5, BLOC1S6 and SNAPIN/BLOC1S8. The BLOC-1 complex associates with the AP-3 protein complex and membrane protein cargos. This BLOC-1 complex also associates with the BLOC-2 complex in endosomes. Binds to DTNA and DTNB but may not be a physiological binding partner. Interacts (isoform 1 and isoform 2 only) with the DNA-dependent protein kinase complex DNA-PK; the interaction phosphorylates DTNBP1 in vitro. Interacts directly in this complex with XRCC5 and XRCC6. Interacts with AP3M1, AP3B2 and TRIM32. Interacts with XPO1; the interaction exports DTNBP1 out of the nucleus. Ubiquitinated by TRIM32. Ubiquitination leads to DTNBP1 degradation. In terms of processing, isoforms 1 and 2 highly phosphorylated by PRKDC in vitro. Isoform 3 only weakly phosphorylated by PRKDC in vitro. As to expression, detected in brain, in neurons and in neuropil. Isoform 1 is expressed in the cerebral cortex, and hippocampal frontal (HF). Specific expression in the posterior half of the superior temporal gyrus (pSTG). Higher expression of isoform 2 and 3 in the HF than in the pSTG while isoform 1 shows no difference in expression in these areas. In the HF, detected in dentate gyrus (DG) and in pyramidal cells of hippocampus CA2 and CA3 (at protein level). Expressed in all principal neuronal populations of the HF, namely pyramidal neurons in the subiculum and CA1-3, granule cells in the dense cell layer of the DG (DGg), and polymorph cells in the hilus of the DG (DGh). Maximal levels in CA2, CA3, and DGh. Isoform 2 not expressed in the cerebral cortex.

It localises to the cytoplasm. It is found in the cytoplasmic vesicle membrane. Its subcellular location is the endosome membrane. The protein localises to the melanosome membrane. The protein resides in the postsynaptic density. It localises to the endoplasmic reticulum. It is found in the nucleus. Its subcellular location is the cytoplasmic vesicle. The protein localises to the secretory vesicle. The protein resides in the synaptic vesicle membrane. It localises to the postsynaptic cell membrane. In terms of biological role, component of the BLOC-1 complex, a complex that is required for normal biogenesis of lysosome-related organelles (LRO), such as platelet dense granules and melanosomes. In concert with the AP-3 complex, the BLOC-1 complex is required to target membrane protein cargos into vesicles assembled at cell bodies for delivery into neurites and nerve terminals. The BLOC-1 complex, in association with SNARE proteins, is also proposed to be involved in neurite extension. Associates with the BLOC-2 complex to facilitate the transport of TYRP1 independent of AP-3 function. Plays a role in synaptic vesicle trafficking and in neurotransmitter release. Plays a role in the regulation of cell surface exposure of DRD2. May play a role in actin cytoskeleton reorganization and neurite outgrowth. May modulate MAPK8 phosphorylation. Appears to promote neuronal transmission and viability through regulating the expression of SNAP25 and SYN1, modulating PI3-kinase-Akt signaling and influencing glutamatergic release. Regulates the expression of SYN1 through binding to its promoter. Modulates prefrontal cortical activity via the dopamine/D2 pathway. The sequence is that of Dysbindin (DTNBP1) from Homo sapiens (Human).